A 236-amino-acid chain; its full sequence is tRNA (guanine-N(7)-)-methyltransferase (236 aa).

S-adenosyl-L-methionine is bound by residues Asp-35, Glu-60, Asn-87, and Asp-113. Residue Asp-113 is part of the active site. 2 residues coordinate substrate: Lys-117 and Asp-149.

This sequence belongs to the class I-like SAM-binding methyltransferase superfamily. TrmB family.

The catalysed reaction is guanosine(46) in tRNA + S-adenosyl-L-methionine = N(7)-methylguanosine(46) in tRNA + S-adenosyl-L-homocysteine. The protein operates within tRNA modification; N(7)-methylguanine-tRNA biosynthesis. In terms of biological role, catalyzes the formation of N(7)-methylguanine at position 46 (m7G46) in tRNA. The protein is tRNA (guanine-N(7)-)-methyltransferase of Prochlorococcus marinus (strain MIT 9313).